The following is a 268-amino-acid chain: Tryptophan synthase alpha chain (268 aa).

Residues glutamate 49 and aspartate 60 each act as proton acceptor in the active site.

This sequence belongs to the TrpA family. As to quaternary structure, tetramer of two alpha and two beta chains.

The catalysed reaction is (1S,2R)-1-C-(indol-3-yl)glycerol 3-phosphate + L-serine = D-glyceraldehyde 3-phosphate + L-tryptophan + H2O. It participates in amino-acid biosynthesis; L-tryptophan biosynthesis; L-tryptophan from chorismate: step 5/5. Functionally, the alpha subunit is responsible for the aldol cleavage of indoleglycerol phosphate to indole and glyceraldehyde 3-phosphate. The protein is Tryptophan synthase alpha chain of Pseudomonas aeruginosa (strain UCBPP-PA14).